Here is a 1938-residue protein sequence, read N- to C-terminus: Myosin-1 (1938 aa).

The disordered stretch occupies residues 1-27 (MSLEHEKDPGWQYLKRSREQQLADQSR). The span at 16 to 27 (RSREQQLADQSR) shows a compositional bias: basic and acidic residues. The 51-residue stretch at 30–80 (DSKKNVWIPDAEEGYIEGVIKGPGPKADTVIVTAGGKDVTLKKDIVQEVNP) folds into the Myosin N-terminal SH3-like domain. A Myosin motor domain is found at 84–785 (EKTEDMSNLT…VVAHIEDLRD (702 aa)). Lys-128 bears the N6,N6,N6-trimethyllysine mark. 177–184 (GESGAGKT) contacts ATP. 2 actin-binding regions span residues 660–682 (LNKL…IPNE) and 764–778 (RIGH…GVVA). An alpha-helical tailpiece (short S2) region spans residues 846-1170 (QLKCGKMAEE…NKQLEIQQDN (325 aa)). A rodlike tail (S2 and LMM domains) region spans residues 846–1938 (QLKCGKMAEE…GQVVRSATNK (1093 aa)). The stretch at 846 to 1938 (QLKCGKMAEE…GQVVRSATNK (1093 aa)) forms a coiled coil. Residues 919–951 (RQEVEKSLNDANDRLSEHEEKNADLEKQRRKAQ) form a disordered region. Basic and acidic residues predominate over residues 920-951 (QEVEKSLNDANDRLSEHEEKNADLEKQRRKAQ). Residues 1171 to 1938 (NKKKDSEIIK…GQVVRSATNK (768 aa)) form a light meromyosin (LMM) region.

It belongs to the TRAFAC class myosin-kinesin ATPase superfamily. Myosin family. In terms of assembly, muscle myosin is a hexameric protein that consists of 2 heavy chain subunits (MHC), 2 alkali light chain subunits (MLC) and 2 regulatory light chain subunits (MLC-2). Interacts with itr-1 (via c-terminal coiled coil domain). Found exclusively in the pharyngeal muscle.

It localises to the cytoplasm. It is found in the myofibril. In terms of biological role, muscle contraction. In Caenorhabditis elegans, this protein is Myosin-1.